A 99-amino-acid chain; its full sequence is Aspartyl/glutamyl-tRNA(Asn/Gln) amidotransferase subunit C (99 aa).

This sequence belongs to the GatC family. In terms of assembly, heterotrimer of A, B and C subunits.

It carries out the reaction L-glutamyl-tRNA(Gln) + L-glutamine + ATP + H2O = L-glutaminyl-tRNA(Gln) + L-glutamate + ADP + phosphate + H(+). It catalyses the reaction L-aspartyl-tRNA(Asn) + L-glutamine + ATP + H2O = L-asparaginyl-tRNA(Asn) + L-glutamate + ADP + phosphate + 2 H(+). In terms of biological role, allows the formation of correctly charged Asn-tRNA(Asn) or Gln-tRNA(Gln) through the transamidation of misacylated Asp-tRNA(Asn) or Glu-tRNA(Gln) in organisms which lack either or both of asparaginyl-tRNA or glutaminyl-tRNA synthetases. The reaction takes place in the presence of glutamine and ATP through an activated phospho-Asp-tRNA(Asn) or phospho-Glu-tRNA(Gln). This chain is Aspartyl/glutamyl-tRNA(Asn/Gln) amidotransferase subunit C, found in Paraburkholderia phymatum (strain DSM 17167 / CIP 108236 / LMG 21445 / STM815) (Burkholderia phymatum).